Consider the following 609-residue polypeptide: Putative pectinesterase/pectinesterase inhibitor 45 (609 aa).

A helical membrane pass occupies residues 25–45; sequence IILGVVSVLVVAAAIIGGAFA. N-linked (GlcNAc...) asparagine glycans are attached at residues Asn51, Asn62, Asn100, Asn114, Asn183, Asn229, Asn296, Asn306, Asn346, and Asn362. A disordered region spans residues 54–87; that stretch reads QEQGKTTNNKSKDSPTKSESPSPKPPSSAAQTVK. The interval 89-241 is pectinesterase inhibitor 45; that stretch reads GQVDKIIQTL…QVLTSNSLAM (153 aa). Residues 296–593 form a pectinesterase 45 region; that stretch reads NATVAKDGSG…FTVGPFLQGE (298 aa). Residues Thr371 and Gln401 each contribute to the substrate site. The active-site Proton donor; for pectinesterase activity is the Asp424. An intrachain disulfide couples Cys438 to Cys458. Asp445 serves as the catalytic Nucleophile; for pectinesterase activity. An N-linked (GlcNAc...) asparagine glycan is attached at Asn491. Substrate-binding residues include Arg513 and Trp515.

In the N-terminal section; belongs to the PMEI family. This sequence in the C-terminal section; belongs to the pectinesterase family. Expressed in flower buds and pollen.

It is found in the membrane. It carries out the reaction [(1-&gt;4)-alpha-D-galacturonosyl methyl ester](n) + n H2O = [(1-&gt;4)-alpha-D-galacturonosyl](n) + n methanol + n H(+). It participates in glycan metabolism; pectin degradation; 2-dehydro-3-deoxy-D-gluconate from pectin: step 1/5. Functionally, acts in the modification of cell walls via demethylesterification of cell wall pectin. In Arabidopsis thaliana (Mouse-ear cress), this protein is Putative pectinesterase/pectinesterase inhibitor 45 (PME45).